Here is a 339-residue protein sequence, read N- to C-terminus: Serine/threonine-protein kinase SAPK2 (339 aa).

Residues 4–260 (YEVIKDIGSG…IPEIKNHPWF (257 aa)) enclose the Protein kinase domain. ATP-binding positions include 10 to 18 (IGSGNFGVA) and Lys33. Residue Asp123 is the Proton acceptor of the active site. A C-terminal region spans residues 253 to 339 (EIKNHPWFLK…EDSGDFVCAL (87 aa)).

Belongs to the protein kinase superfamily. Ser/Thr protein kinase family. In terms of assembly, interacts with BZIP46. Interacts with ABI5 and PP2C30. Interacts with PP2C51. Phosphorylated. As to expression, expressed in leaf blades, leaf sheaths and roots. Expressed in shoots and roots of young seedlings.

It localises to the cytoplasm. It is found in the nucleus. It carries out the reaction L-seryl-[protein] + ATP = O-phospho-L-seryl-[protein] + ADP + H(+). It catalyses the reaction L-threonyl-[protein] + ATP = O-phospho-L-threonyl-[protein] + ADP + H(+). With respect to regulation, activated by phosphorylation in response to hyperosmotic stress within 5 minutes. Functionally, may play a role in signal transduction of hyperosmotic response. Can phosphorylate BZIP46 in vitro. Together with ABI5, PP2C30 and PYL5, is part of an abscisic acid (ABA) signaling unit that modulates seed germination and early seedling growth. In Oryza sativa subsp. japonica (Rice), this protein is Serine/threonine-protein kinase SAPK2 (SAPK2).